Here is a 222-residue protein sequence, read N- to C-terminus: Glutathione S-transferase alpha-1 (222 aa).

N-acetylmethionine is present on Met1. One can recognise a GST N-terminal domain in the interval 3-83; the sequence is GKPVLHYFNA…YIATKYDLYG (81 aa). An N6-succinyllysine modification is found at Lys4. Glutathione is bound by residues Tyr9, Lys45, 54-55, and 67-68; these read QV and QT. Residues 85–208 enclose the GST C-terminal domain; that stretch reads DMKERALIDM…QPGSQRKLPV (124 aa).

Belongs to the GST superfamily. Alpha family. In terms of assembly, homodimer. Homodimer or heterodimer of GSTA1 and GSTA2.

Its subcellular location is the cytoplasm. The catalysed reaction is RX + glutathione = an S-substituted glutathione + a halide anion + H(+). It catalyses the reaction prostaglandin A2 + glutathione = prostaglandin A2-S-(R)-glutathione. The enzyme catalyses prostaglandin J2 + glutathione = prostaglandin J2-S-(R)-glutathione. It carries out the reaction (13S)-hydroperoxy-(9Z,11E)-octadecadienoate + 2 glutathione = (13S)-hydroxy-(9Z,11E)-octadecadienoate + glutathione disulfide + H2O. The catalysed reaction is androst-5-ene-3,17-dione = androst-4-ene-3,17-dione. Functionally, glutathione S-transferase that catalyzes the nucleophilic attack of the sulfur atom of glutathione on the electrophilic groups of a wide range of exogenous and endogenous compounds. Involved in the formation of glutathione conjugates of both prostaglandin A2 (PGA2) and prostaglandin J2 (PGJ2). It also catalyzes the isomerization of D5-androstene-3,17-dione (AD) into D4-androstene-3,17-dione and may therefore play an important role in hormone biosynthesis. Through its glutathione-dependent peroxidase activity toward the fatty acid hydroperoxide (13S)-hydroperoxy-(9Z,11E)-octadecadienoate/13-HPODE it is also involved in the metabolism of oxidized linoleic acid. This chain is Glutathione S-transferase alpha-1 (Gsta1), found in Rattus norvegicus (Rat).